The chain runs to 326 residues: Glyoxylate/hydroxypyruvate reductase B (326 aa).

Residues Arg237 and Glu266 contribute to the active site. Catalysis depends on His285, which acts as the Proton donor.

Belongs to the D-isomer specific 2-hydroxyacid dehydrogenase family. GhrB subfamily. Homodimer.

The protein resides in the cytoplasm. The enzyme catalyses glycolate + NADP(+) = glyoxylate + NADPH + H(+). The catalysed reaction is (R)-glycerate + NAD(+) = 3-hydroxypyruvate + NADH + H(+). It carries out the reaction (R)-glycerate + NADP(+) = 3-hydroxypyruvate + NADPH + H(+). Functionally, catalyzes the NADPH-dependent reduction of glyoxylate and hydroxypyruvate into glycolate and glycerate, respectively. The protein is Glyoxylate/hydroxypyruvate reductase B of Yersinia pseudotuberculosis serotype O:1b (strain IP 31758).